A 694-amino-acid polypeptide reads, in one-letter code: TBC1 domain family member 14 (694 aa).

Residue serine 92 is modified to Phosphoserine. Residues 272 to 289 (TAQKDSKKTQKEYEDKAG) show a composition bias toward basic and acidic residues. The interval 272 to 305 (TAQKDSKKTQKEYEDKAGRPSRPPSPKQNVRKNL) is disordered. Serine 296 is subject to Phosphoserine. A Rab-GAP TBC domain is found at 402–612 (GIPPSVRGKV…RIWDVFCRDG (211 aa)).

In terms of assembly, interacts with ULK1. May interact with RAB11A and RAB11B, but does not exhibit any GTPase-activating activity toward these proteins. Interacts with TRAPPC8.

The protein localises to the golgi apparatus. Its subcellular location is the cis-Golgi network. It localises to the trans-Golgi network. In terms of biological role, plays a role in the regulation of starvation-induced autophagosome formation. Together with the TRAPPIII complex, regulates a constitutive trafficking step from peripheral recycling endosomes to the early Golgi, maintaining the cycling pool of ATG9 required for initiation of autophagy. This is TBC1 domain family member 14 (Tbc1d14) from Mus musculus (Mouse).